Consider the following 303-residue polypeptide: Probable cell division protein WhiA (303 aa).

The segment at residues 272–303 is a DNA-binding region (H-T-H motif); it reads SIQQLADSLSTPLTKSGVNHRLRKINKIADEL.

The protein belongs to the WhiA family.

Its function is as follows. Involved in cell division and chromosome segregation. The polypeptide is Probable cell division protein WhiA (Streptococcus pneumoniae (strain Hungary19A-6)).